The sequence spans 208 residues: Small ribosomal subunit protein uS4 (208 aa).

Residues 28 to 48 form a disordered region; it reads YMERRPYGPGEHGRARKKQDS. Residues 95 to 160 enclose the S4 RNA-binding domain; sequence MRLDALVLRA…MPPFQVAAAG (66 aa).

Belongs to the universal ribosomal protein uS4 family. As to quaternary structure, part of the 30S ribosomal subunit. Contacts protein S5. The interaction surface between S4 and S5 is involved in control of translational fidelity.

Its function is as follows. One of the primary rRNA binding proteins, it binds directly to 16S rRNA where it nucleates assembly of the body of the 30S subunit. With S5 and S12 plays an important role in translational accuracy. The sequence is that of Small ribosomal subunit protein uS4 from Arthrobacter sp. (strain FB24).